Consider the following 129-residue polypeptide: Large ribosomal subunit protein bL12 (129 aa).

The protein belongs to the bacterial ribosomal protein bL12 family. Homodimer. Part of the ribosomal stalk of the 50S ribosomal subunit. Forms a multimeric L10(L12)X complex, where L10 forms an elongated spine to which 2 to 4 L12 dimers bind in a sequential fashion. Binds GTP-bound translation factors.

In terms of biological role, forms part of the ribosomal stalk which helps the ribosome interact with GTP-bound translation factors. Is thus essential for accurate translation. The sequence is that of Large ribosomal subunit protein bL12 from Pelotomaculum thermopropionicum (strain DSM 13744 / JCM 10971 / SI).